Reading from the N-terminus, the 333-residue chain is Adenosine deaminase (333 aa).

Positions 12 and 14 each coordinate Zn(2+). Residues histidine 14, aspartate 16, and glycine 170 each coordinate substrate. Position 197 (histidine 197) interacts with Zn(2+). The active-site Proton donor is glutamate 200. Aspartate 278 provides a ligand contact to Zn(2+). A substrate-binding site is contributed by aspartate 279.

The protein belongs to the metallo-dependent hydrolases superfamily. Adenosine and AMP deaminases family. Adenosine deaminase subfamily. Zn(2+) serves as cofactor.

It catalyses the reaction adenosine + H2O + H(+) = inosine + NH4(+). The catalysed reaction is 2'-deoxyadenosine + H2O + H(+) = 2'-deoxyinosine + NH4(+). Its function is as follows. Catalyzes the hydrolytic deamination of adenosine and 2-deoxyadenosine. The sequence is that of Adenosine deaminase from Shigella dysenteriae serotype 1 (strain Sd197).